A 244-amino-acid chain; its full sequence is Ethylene-responsive transcription factor ERF013 (244 aa).

A disordered region spans residues 1-33; it reads MVKQELKIQVTTSSSSLSHSSSSSSSSTSALRH. Residues 11-29 show a composition bias toward low complexity; sequence TTSSSSLSHSSSSSSSSTS. The segment at residues 42 to 99 is a DNA-binding region (AP2/ERF); it reads KYKGVRMRSWGSWVTEIRAPNQKTRIWLGSYSTAEAAARAYDAALLCLKGPKANLNFP. Residues 123–178 are disordered; sequence QKVAAQAANSSSDHFTPPSDENDHDHDDGLDHHPSASSSAASSPPDDDHHNDDDGD. Positions 143-156 are enriched in basic and acidic residues; the sequence is ENDHDHDDGLDHHP. Residues 157-166 show a composition bias toward low complexity; it reads SASSSAASSP.

The protein belongs to the AP2/ERF transcription factor family. ERF subfamily.

The protein resides in the nucleus. Functionally, probably acts as a transcriptional activator. Binds to the GCC-box pathogenesis-related promoter element. May be involved in the regulation of gene expression by stress factors and by components of stress signal transduction pathways. The chain is Ethylene-responsive transcription factor ERF013 (ERF013) from Arabidopsis thaliana (Mouse-ear cress).